We begin with the raw amino-acid sequence, 901 residues long: Protein translocase subunit SecA (901 aa).

ATP is bound by residues glutamine 87, glycine 105–threonine 109, and aspartate 512. The disordered stretch occupies residues glutamine 855–lysine 891. Residues cysteine 885, cysteine 887, cysteine 896, and histidine 897 each contribute to the Zn(2+) site.

Belongs to the SecA family. In terms of assembly, monomer and homodimer. Part of the essential Sec protein translocation apparatus which comprises SecA, SecYEG and auxiliary proteins SecDF-YajC and YidC. Zn(2+) is required as a cofactor.

The protein resides in the cell inner membrane. The protein localises to the cytoplasm. The enzyme catalyses ATP + H2O + cellular proteinSide 1 = ADP + phosphate + cellular proteinSide 2.. Functionally, part of the Sec protein translocase complex. Interacts with the SecYEG preprotein conducting channel. Has a central role in coupling the hydrolysis of ATP to the transfer of proteins into and across the cell membrane, serving both as a receptor for the preprotein-SecB complex and as an ATP-driven molecular motor driving the stepwise translocation of polypeptide chains across the membrane. This Cronobacter sakazakii (strain ATCC BAA-894) (Enterobacter sakazakii) protein is Protein translocase subunit SecA.